Here is a 124-residue protein sequence, read N- to C-terminus: Holo-[acyl-carrier-protein] synthase (124 aa).

Asp8 and Glu56 together coordinate Mg(2+).

It belongs to the P-Pant transferase superfamily. AcpS family. Mg(2+) is required as a cofactor.

The protein localises to the cytoplasm. It catalyses the reaction apo-[ACP] + CoA = holo-[ACP] + adenosine 3',5'-bisphosphate + H(+). Transfers the 4'-phosphopantetheine moiety from coenzyme A to a Ser of acyl-carrier-protein. The chain is Holo-[acyl-carrier-protein] synthase from Maridesulfovibrio salexigens (strain ATCC 14822 / DSM 2638 / NCIMB 8403 / VKM B-1763) (Desulfovibrio salexigens).